Reading from the N-terminus, the 1302-residue chain is Vascular endothelial growth factor receptor kdr-like (1302 aa).

The first 28 residues, 1-28 (MTPLKTSVKAFFTLHVLFSCISHGLVEG), serve as a signal peptide directing secretion. The Extracellular portion of the chain corresponds to 29–740 (SRLPDPQLLP…GEDGKPNIEV (712 aa)). Ig-like C2-type domains lie at 34 to 115 (PQLL…HEVS), 143 to 206 (DPYF…VDNA), 222 to 318 (KNLA…TKVI), 326 to 412 (NVTH…ISYK), 419 to 542 (PKIF…FYVD), 545 to 636 (PQPF…SALT), and 643 to 728 (PWLM…AVIT). Disulfide bonds link cysteine 55/cysteine 104 and cysteine 150/cysteine 199. Asparagine 69 and asparagine 97 each carry an N-linked (GlcNAc...) asparagine glycan. Residues asparagine 242, asparagine 265, asparagine 291, asparagine 326, asparagine 370, asparagine 380, asparagine 408, asparagine 453, asparagine 466, asparagine 505, asparagine 517, asparagine 532, asparagine 607, asparagine 611, asparagine 630, asparagine 648, and asparagine 655 are each glycosylated (N-linked (GlcNAc...) asparagine). Cysteine 243 and cysteine 302 form a disulfide bridge. Cysteines 444 and 524 form a disulfide. Residues cysteine 565 and cysteine 618 are joined by a disulfide bond. Cysteine 664 and cysteine 712 are disulfide-bonded. Residues 741–761 (IILVSTGAAATFLWIMLILFI) traverse the membrane as a helical segment. Residues 762 to 1302 (RKLRKPSSAD…YVVRYSTPPV (541 aa)) lie on the Cytoplasmic side of the membrane. A Protein kinase domain is found at 809–1139 (LRLGKTLGHG…ELVERLGDLL (331 aa)). ATP contacts are provided by residues 815-823 (LGHGAFGKV) and lysine 843. The Proton acceptor role is filled by aspartate 1003. Phosphotyrosine; by autocatalysis is present on residues tyrosine 1029, tyrosine 1034, and tyrosine 1150. Disordered regions lie at residues 1159-1179 (TKAD…PVSL) and 1266-1292 (PLVP…PDYN). A compositionally biased stretch (polar residues) spans 1162 to 1176 (DPSNQSPTEETSTRP).

The protein belongs to the protein kinase superfamily. Tyr protein kinase family. CSF-1/PDGF receptor subfamily. Interacts with isoform VEGF165 of vegfaa and isoform VEGF171 of vegfab. Phosphorylated and activated by vegfaa and vegfab. As to expression, first expressed in embryos between 5- and 7-somites. At 7 somites, expressed in discrete bilateral stripes both anteriorly and posteriorly, and in a transverse ectodermal stripe in the hindbrain. From 7-somites, expression seems to extend caudally from the head, and in both directions in the trunk region, until by 20-somites, expression is detected as a continuous band from the anterior head region to the tailbud. Concurrently, cells expressing kdrl in the mid- and posterior trunk regions converge medially. By 24 hours post-fertilization (hpf), expressed in all the endothelial cells lining the vasculature.

The protein resides in the cell membrane. The catalysed reaction is L-tyrosyl-[protein] + ATP = O-phospho-L-tyrosyl-[protein] + ADP + H(+). In terms of biological role, receptor for VEGF or VEGFC. Has a tyrosine-protein kinase activity. Combinations of multiple VEGF receptors are required for development of different blood vessel types in the embryo. Involved in angiogenesis, specifically in VEGF-induced sprouting of new blood vessels. Particularly involved in artery formation. Does not appear to be required for hematopoiesis. This is Vascular endothelial growth factor receptor kdr-like (kdrl) from Danio rerio (Zebrafish).